We begin with the raw amino-acid sequence, 360 residues long: Peptide chain release factor 1 (360 aa).

The residue at position 235 (glutamine 235) is an N5-methylglutamine. The interval lysine 285–proline 313 is disordered.

Belongs to the prokaryotic/mitochondrial release factor family. Post-translationally, methylated by PrmC. Methylation increases the termination efficiency of RF1.

It localises to the cytoplasm. In terms of biological role, peptide chain release factor 1 directs the termination of translation in response to the peptide chain termination codons UAG and UAA. This chain is Peptide chain release factor 1, found in Enterobacter sp. (strain 638).